The primary structure comprises 497 residues: L-carnitine dehydrogenase/betainyl-CoA thioesterase (497 aa).

The interval Met-1–Pro-335 is L-carnitine dehydrogenase. Residue Gly-11–Gly-16 participates in NAD(+) binding. An important for dehydrogenase activity region spans residues Ala-330–Pro-335. The tract at residues Glu-336–Ala-497 is betainyl-CoA thioesterase.

In the N-terminal section; belongs to the 3-hydroxyacyl-CoA dehydrogenase family. L-carnitine dehydrogenase subfamily. This sequence in the C-terminal section; belongs to the betainyl-CoA thioesterase family. In terms of assembly, homodimer.

The protein localises to the cytoplasm. It carries out the reaction carnitine + NAD(+) = 3-dehydrocarnitine + NADH + H(+). It catalyses the reaction N,N,N-trimethylglycyl-CoA + H2O = glycine betaine + CoA + H(+). Its pathway is amine and polyamine metabolism; carnitine metabolism. Its function is as follows. Catalyzes the NAD(+)-dependent oxidation of L-carnitine to 3-dehydrocarnitine. Probably also catalyzes the cleavage of betainyl-CoA (N,N,N-trimethylglycyl-CoA) into glycine betaine and coenzyme A. Despite a high similarity to 3-hydroxyacyl-CoA dehydrogenases, cannot dehydrogenate 3-hydroxybutylate and 3-hydroxybutyl-CoA. Is probably involved in a L-carnitine degradation pathway that allows Rhizobium sp. YS-240 to grow on L-carnitine as the sole source of carbon and nitrogen. This chain is L-carnitine dehydrogenase/betainyl-CoA thioesterase, found in Rhizobium sp.